The following is an 87-amino-acid chain: Small ribosomal subunit protein uS17 (87 aa).

The protein belongs to the universal ribosomal protein uS17 family. Part of the 30S ribosomal subunit.

Functionally, one of the primary rRNA binding proteins, it binds specifically to the 5'-end of 16S ribosomal RNA. This is Small ribosomal subunit protein uS17 from Oceanobacillus iheyensis (strain DSM 14371 / CIP 107618 / JCM 11309 / KCTC 3954 / HTE831).